The sequence spans 424 residues: Serine--tRNA ligase (424 aa).

Residue 231–233 (TAE) coordinates L-serine. 262–264 (RSE) contributes to the ATP binding site. Glu285 contacts L-serine. 349 to 352 (EISS) is an ATP binding site. Ser385 provides a ligand contact to L-serine.

This sequence belongs to the class-II aminoacyl-tRNA synthetase family. Type-1 seryl-tRNA synthetase subfamily. As to quaternary structure, homodimer. The tRNA molecule binds across the dimer.

The protein localises to the cytoplasm. The catalysed reaction is tRNA(Ser) + L-serine + ATP = L-seryl-tRNA(Ser) + AMP + diphosphate + H(+). It catalyses the reaction tRNA(Sec) + L-serine + ATP = L-seryl-tRNA(Sec) + AMP + diphosphate + H(+). The protein operates within aminoacyl-tRNA biosynthesis; selenocysteinyl-tRNA(Sec) biosynthesis; L-seryl-tRNA(Sec) from L-serine and tRNA(Sec): step 1/1. Functionally, catalyzes the attachment of serine to tRNA(Ser). Is also able to aminoacylate tRNA(Sec) with serine, to form the misacylated tRNA L-seryl-tRNA(Sec), which will be further converted into selenocysteinyl-tRNA(Sec). The chain is Serine--tRNA ligase from Marinobacter nauticus (strain ATCC 700491 / DSM 11845 / VT8) (Marinobacter aquaeolei).